The primary structure comprises 553 residues: Glutamate--tRNA ligase (553 aa).

The short motif at 103–113 (PNPSGPLHIGH) is the 'HIGH' region element.

This sequence belongs to the class-I aminoacyl-tRNA synthetase family. Glutamate--tRNA ligase type 2 subfamily.

It localises to the cytoplasm. The enzyme catalyses tRNA(Glu) + L-glutamate + ATP = L-glutamyl-tRNA(Glu) + AMP + diphosphate. In terms of biological role, catalyzes the attachment of glutamate to tRNA(Glu) in a two-step reaction: glutamate is first activated by ATP to form Glu-AMP and then transferred to the acceptor end of tRNA(Glu). The sequence is that of Glutamate--tRNA ligase from Methanothermobacter thermautotrophicus (strain ATCC 29096 / DSM 1053 / JCM 10044 / NBRC 100330 / Delta H) (Methanobacterium thermoautotrophicum).